A 447-amino-acid chain; its full sequence is Phosphoglucosamine mutase (447 aa).

Residue Ser-107 is the Phosphoserine intermediate of the active site. Positions 107, 246, 248, and 250 each coordinate Mg(2+). Ser-107 carries the post-translational modification Phosphoserine.

This sequence belongs to the phosphohexose mutase family. Mg(2+) is required as a cofactor. Post-translationally, activated by phosphorylation.

It carries out the reaction alpha-D-glucosamine 1-phosphate = D-glucosamine 6-phosphate. In terms of biological role, catalyzes the conversion of glucosamine-6-phosphate to glucosamine-1-phosphate. The polypeptide is Phosphoglucosamine mutase (Ralstonia nicotianae (strain ATCC BAA-1114 / GMI1000) (Ralstonia solanacearum)).